The chain runs to 810 residues: F-BAR domain only protein 2 (810 aa).

The F-BAR domain maps to 3-250 (MAYFVENFWG…NMANTTVESL (248 aa)). Residues 3 to 274 (MAYFVENFWG…PGLIEFEECD (272 aa)) are mediates dimerization and binding to membranes enriched in Pi(4,5)-P2 and induces their tubulation. Residues 87 to 156 (HLDLVRKLQE…CVEQERLKKE (70 aa)) adopt a coiled-coil conformation. A Glycyl lysine isopeptide (Lys-Gly) (interchain with G-Cter in SUMO2) cross-link involves residue K297. The interval 301–352 (DAESVECPDADSLNIPDVDEEGYSIKPETNQNDTKENHFYSSSDSDSEDEEP) is disordered. The residue at position 312 (S312) is a Phosphoserine. A Phosphothreonine modification is found at T385. Phosphoserine is present on residues S387, S394, and S403. Residues 404-537 (NEELTKSKPS…VSRGPSPVSL (134 aa)) form a disordered region. A compositionally biased stretch (low complexity) spans 433–456 (PSLDSSSSSSLTSSSSARPTTPLS). Phosphoserine occurs at positions 488, 493, 496, 508, 510, 511, and 533. Positions 502-521 (PLARAESSSSISSSASLSAA) are enriched in low complexity. The mediates interaction with DAB2, EPS15, EPS15R and ITSN1 stretch occupies residues 521–810 (ANTPTVGVSR…FATGRYLADC (290 aa)). An MHD domain is found at 542-809 (TLPVAVALTE…RFATGRYLAD (268 aa)).

The protein belongs to the FCHO family. Homodimer; disulfide-linked. May form homotetramer. Interacts with AP2A1. Interacts with EPS15, EPS15R, ITSN1 and ITSN2; recruit those scaffolding proteins which in turn may interact with the adaptor protein complex AP-2 at the plasma membrane. Interacts with DAB2 (via DPF motifs); mediates LDL receptor/LDLR endocytosis. Ubiquitinated. Mainly undergoes monoubiquitination but also polyubiquitination.

It is found in the membrane. The protein localises to the clathrin-coated pit. Functions in an early step of clathrin-mediated endocytosis. Has both a membrane binding/bending activity and the ability to recruit proteins essential to the formation of functional clathrin-coated pits. Has a lipid-binding activity with a preference for membranes enriched in phosphatidylserine and phosphoinositides (Pi(4,5) biphosphate) like the plasma membrane. Its membrane-bending activity might be important for the subsequent action of clathrin and adaptors in the formation of clathrin-coated vesicles. Involved in adaptor protein complex AP-2-dependent endocytosis of the transferrin receptor, it also functions in the AP-2-independent endocytosis of the LDL receptor. The polypeptide is F-BAR domain only protein 2 (FCHO2) (Homo sapiens (Human)).